The chain runs to 732 residues: Engulfment and cell motility protein 2 (732 aa).

Y48 carries the post-translational modification Phosphotyrosine. The ELMO domain maps to 323–497 (AQRDIIFELR…VVREQITRAL (175 aa)). At S515 the chain carries Phosphoserine. The PH domain occupies 565–686 (SSFRKIGNRR…LLGKDMSSEL (122 aa)). The SH3-binding signature appears at 712–719 (PEAPPPVP). Y729 carries the phosphotyrosine modification.

In terms of assembly, interacts directly with the SH3-domain of DOCK1 via its SH3-binding site. Probably forms a heterotrimeric complex with DOCK1 and RAC1. Interacts with ARHGEF16, DOCK4 and EPHA2; mediates activation of RAC1 by EPHA2. Interacts with ADGRB3. Interacts with AUTS2; the interaction is direct.

The protein resides in the cytoplasm. It localises to the cytosol. The protein localises to the membrane. In terms of biological role, involved in cytoskeletal rearrangements required for phagocytosis of apoptotic cells and cell motility. Acts in association with DOCK1 and CRK. Was initially proposed to be required in complex with DOCK1 to activate Rac Rho small GTPases. May enhance the guanine nucleotide exchange factor (GEF) activity of DOCK1. This Mus musculus (Mouse) protein is Engulfment and cell motility protein 2 (Elmo2).